Consider the following 66-residue polypeptide: Beta-toxin Cbo3 (66 aa).

Residues 1-66 form the LCN-type CS-alpha/beta domain; sequence KEGYIVNYHD…VWPLPKKTCN (66 aa). Intrachain disulfides connect Cys12-Cys65, Cys16-Cys41, Cys25-Cys46, and Cys29-Cys48. Asn66 is subject to Asparagine amide.

Belongs to the long (4 C-C) scorpion toxin superfamily. Sodium channel inhibitor family. Beta subfamily. As to expression, expressed by the venom gland.

It localises to the secreted. In terms of biological role, beta toxins bind voltage-independently at site-4 of sodium channels and shift the voltage of activation toward more negative potentials thereby affecting sodium channel activation and promoting spontaneous and repetitive firing. A mixture of Cbo2 and Cbo3 is weakly active on the human voltage-gated sodium channels Nav1.4/SCN4A and Nav1.6/SCN8A when tested at 200 nM. In vivo, is toxic to mice when intraperitoneally injected. This Centruroides bonito (Scorpion) protein is Beta-toxin Cbo3.